Consider the following 190-residue polypeptide: Transcription antitermination protein NusB (190 aa).

Residues 135–190 (APAPESVAEEADEESSDSAAAASEPTDEGDVSDSPDSSGASDEPAAPSAEIQPTVD) form a disordered region. The span at 141-150 (VAEEADEESS) shows a compositional bias: acidic residues.

The protein belongs to the NusB family.

Functionally, involved in transcription antitermination. Required for transcription of ribosomal RNA (rRNA) genes. Binds specifically to the boxA antiterminator sequence of the ribosomal RNA (rrn) operons. This Bifidobacterium longum (strain DJO10A) protein is Transcription antitermination protein NusB.